A 536-amino-acid chain; its full sequence is GPI alpha-1,2-mannosyltransferase 3 (536 aa).

Asn-15 carries an N-linked (GlcNAc...) asparagine glycan. The next 2 membrane-spanning stretches (helical) occupy residues 40 to 60 (IFGI…CVLV) and 118 to 138 (VYLL…YADV). Asn-176 carries an N-linked (GlcNAc...) asparagine glycan. The next 6 helical transmembrane spans lie at 206-226 (LVSL…PLIF), 243-263 (YFPI…FFYG), 297-317 (GLPV…LLST), 322-342 (ILLL…HKEF), 344-364 (FIYP…AKLQ), and 369-389 (AAAG…GLVH). An N-linked (GlcNAc...) asparagine glycan is attached at Asn-467.

It belongs to the glycosyltransferase 22 family. PIGB subfamily.

Its subcellular location is the endoplasmic reticulum membrane. It functions in the pathway glycolipid biosynthesis; glycosylphosphatidylinositol-anchor biosynthesis. In terms of biological role, alpha-1,2-mannosyltransferase that catalyzes the transfer of the third mannose, via an alpha-1,2 bond, from a dolichol-phosphate-mannose (Dol-P-Man) to an alpha-D-Man-(1-&gt;6)-2-PEtn-alpha-D-Man-(1-&gt;4)-alpha-D-GlcN-(1-&gt;6)-(1-radyl,2-acyl-sn-glycero-3-phospho)-2-acyl-inositol intermediate to generate an alpha-D-Man-(1-&gt;2)-alpha-D-Man-(1-&gt;6)-2-PEtn-alpha-D-Man-(1-&gt;4)-alpha-D-GlcN-(1-&gt;6)-(1-radyl,2-acyl-sn-glycero-3-phospho)-2-acyl-inositol (also termed H6) and participates in the nineth step of the glycosylphosphatidylinositol-anchor biosynthesis. May also add the third mannose to an alpha-D-Man-(1-&gt;6)-alpha-D-Man-(1-&gt;4)-alpha-D-GlcN-(1-&gt;6)-(1-radyl,2-acyl-sn-glycero-3-phospho)-2-acyl-inositol (also termed H3) intermediate generating an alpha-D-Man-(1-&gt;2)-alpha-D-Man-(1-&gt;6)-alpha-D-Man-(1-&gt;4)-alpha-D-GlcN-(1-&gt;6)-(1-radyl,2-acyl-sn-glycero-3-phospho)-2-acyl-inositol (also termed H4). This is GPI alpha-1,2-mannosyltransferase 3 from Danio rerio (Zebrafish).